Reading from the N-terminus, the 370-residue chain is Dual-specificity RNA methyltransferase RlmN (370 aa).

Catalysis depends on E93, which acts as the Proton acceptor. Residues 99–337 form the Radical SAM core domain; that stretch reads EEGRGTLCVS…VTTVRKTRGD (239 aa). An intrachain disulfide couples C106 to C343. [4Fe-4S] cluster-binding residues include C113, C117, and C120. S-adenosyl-L-methionine-binding positions include 167-168, S199, 221-223, and N300; these read GE and SLH. The S-methylcysteine intermediate role is filled by C343.

This sequence belongs to the radical SAM superfamily. RlmN family. [4Fe-4S] cluster is required as a cofactor.

Its subcellular location is the cytoplasm. It catalyses the reaction adenosine(2503) in 23S rRNA + 2 reduced [2Fe-2S]-[ferredoxin] + 2 S-adenosyl-L-methionine = 2-methyladenosine(2503) in 23S rRNA + 5'-deoxyadenosine + L-methionine + 2 oxidized [2Fe-2S]-[ferredoxin] + S-adenosyl-L-homocysteine. The catalysed reaction is adenosine(37) in tRNA + 2 reduced [2Fe-2S]-[ferredoxin] + 2 S-adenosyl-L-methionine = 2-methyladenosine(37) in tRNA + 5'-deoxyadenosine + L-methionine + 2 oxidized [2Fe-2S]-[ferredoxin] + S-adenosyl-L-homocysteine. Its function is as follows. Specifically methylates position 2 of adenine 2503 in 23S rRNA and position 2 of adenine 37 in tRNAs. m2A2503 modification seems to play a crucial role in the proofreading step occurring at the peptidyl transferase center and thus would serve to optimize ribosomal fidelity. The chain is Dual-specificity RNA methyltransferase RlmN from Francisella tularensis subsp. novicida (strain U112).